The chain runs to 200 residues: Cytochrome c biogenesis ATP-binding export protein CcmA (200 aa).

In terms of domain architecture, ABC transporter spans Leu-2–Leu-200. Gly-34 to Thr-41 contributes to the ATP binding site.

Belongs to the ABC transporter superfamily. CcmA exporter (TC 3.A.1.107) family. The complex is composed of two ATP-binding proteins (CcmA) and two transmembrane proteins (CcmB).

The protein localises to the cell inner membrane. The catalysed reaction is heme b(in) + ATP + H2O = heme b(out) + ADP + phosphate + H(+). Part of the ABC transporter complex CcmAB involved in the biogenesis of c-type cytochromes; once thought to export heme, this seems not to be the case, but its exact role is uncertain. Responsible for energy coupling to the transport system. The sequence is that of Cytochrome c biogenesis ATP-binding export protein CcmA from Legionella pneumophila.